We begin with the raw amino-acid sequence, 1004 residues long: NACHT, LRR and PYD domains-containing protein 9C (1004 aa).

The Pyrin domain occupies 1 to 92 (MVDSSSYGLL…TMAQIERRDK (92 aa)). In terms of domain architecture, NACHT spans 143–465 (ATAVVLGTRG…KQDKDTYHPV (323 aa)). 149–156 (GTRGKGKT) is an ATP binding site. LRR repeat units lie at residues 750–770 (KVKH…MFLC), 779–800 (VLES…HLYE), 807–828 (HLSL…LLCE), 836–857 (TLKE…EISA), and 864–884 (NLKT…KRLC).

Belongs to the NLRP family. As to expression, oocyte specific.

It localises to the cytoplasm. Functionally, may be involved in inflammation. This chain is NACHT, LRR and PYD domains-containing protein 9C (Nlrp9c), found in Mus musculus (Mouse).